The primary structure comprises 281 residues: Sulfur carrier protein FdhD (281 aa).

Residue cysteine 127 is the Cysteine persulfide intermediate of the active site. 264–269 is a binding site for Mo-bis(molybdopterin guanine dinucleotide); the sequence is FAREGR.

Belongs to the FdhD family.

The protein resides in the cytoplasm. Its function is as follows. Required for formate dehydrogenase (FDH) activity. Acts as a sulfur carrier protein that transfers sulfur from IscS to the molybdenum cofactor prior to its insertion into FDH. This chain is Sulfur carrier protein FdhD, found in Mannheimia succiniciproducens (strain KCTC 0769BP / MBEL55E).